The chain runs to 552 residues: Dihydroxy-acid dehydratase (552 aa).

Position 78 (Asp-78) interacts with Mg(2+). A [2Fe-2S] cluster-binding site is contributed by Cys-119. Mg(2+) contacts are provided by Asp-120 and Lys-121. Lys-121 carries the N6-carboxylysine modification. Residue Cys-191 participates in [2Fe-2S] cluster binding. Residue Glu-442 participates in Mg(2+) binding. The active-site Proton acceptor is Ser-468.

This sequence belongs to the IlvD/Edd family. Homodimer. It depends on [2Fe-2S] cluster as a cofactor. The cofactor is Mg(2+).

The enzyme catalyses (2R)-2,3-dihydroxy-3-methylbutanoate = 3-methyl-2-oxobutanoate + H2O. The catalysed reaction is (2R,3R)-2,3-dihydroxy-3-methylpentanoate = (S)-3-methyl-2-oxopentanoate + H2O. It participates in amino-acid biosynthesis; L-isoleucine biosynthesis; L-isoleucine from 2-oxobutanoate: step 3/4. Its pathway is amino-acid biosynthesis; L-valine biosynthesis; L-valine from pyruvate: step 3/4. Its function is as follows. Functions in the biosynthesis of branched-chain amino acids. Catalyzes the dehydration of (2R,3R)-2,3-dihydroxy-3-methylpentanoate (2,3-dihydroxy-3-methylvalerate) into 2-oxo-3-methylpentanoate (2-oxo-3-methylvalerate) and of (2R)-2,3-dihydroxy-3-methylbutanoate (2,3-dihydroxyisovalerate) into 2-oxo-3-methylbutanoate (2-oxoisovalerate), the penultimate precursor to L-isoleucine and L-valine, respectively. In Clostridium botulinum (strain Eklund 17B / Type B), this protein is Dihydroxy-acid dehydratase.